The chain runs to 226 residues: Pyridoxal 5'-phosphate synthase subunit Pdx2 (226 aa).

Residue glycine 52 to serine 54 participates in L-glutamine binding. Catalysis depends on cysteine 87, which acts as the Nucleophile. Residues arginine 124 and isoleucine 156–arginine 157 contribute to the L-glutamine site. Catalysis depends on charge relay system residues histidine 199 and glutamate 201.

This sequence belongs to the glutaminase PdxT/SNO family. In terms of assembly, in the presence of PdxS, forms a dodecamer of heterodimers. Only shows activity in the heterodimer.

It carries out the reaction aldehydo-D-ribose 5-phosphate + D-glyceraldehyde 3-phosphate + L-glutamine = pyridoxal 5'-phosphate + L-glutamate + phosphate + 3 H2O + H(+). The catalysed reaction is L-glutamine + H2O = L-glutamate + NH4(+). It functions in the pathway cofactor biosynthesis; pyridoxal 5'-phosphate biosynthesis. Its function is as follows. Catalyzes the hydrolysis of glutamine to glutamate and ammonia as part of the biosynthesis of pyridoxal 5'-phosphate. The resulting ammonia molecule is channeled to the active site of PdxS. The sequence is that of Pyridoxal 5'-phosphate synthase subunit Pdx2 from Plasmodium berghei.